Here is a 675-residue protein sequence, read N- to C-terminus: Nexilin (675 aa).

Positions 1 to 66 (MNDISQKAEI…RKEQYIRERE (66 aa)) are disordered. Lysine 16 bears the Phosphoserine mark. Residues 27-66 (GKGDVKDKFEAMQRAREERNQRRSRDEKQRRKEQYIRERE) show a composition bias toward basic and acidic residues. Residue serine 80 is modified to Phosphoserine. The disordered stretch occupies residues 105-127 (RFAEMEKQRQEEQRKRTEEERKR). At serine 241 the chain carries Phosphoserine. Disordered stretches follow at residues 254–278 (LERQ…EEEK) and 313–336 (SFEE…ARRR). Phosphoserine occurs at positions 357 and 365. Threonine 370 carries the post-translational modification Phosphothreonine. 2 disordered regions span residues 487–513 (ENFH…KVNM) and 551–584 (LQKK…APWF). Residues serine 564 and serine 569 each carry the phosphoserine modification. The Ig-like domain maps to 582-670 (PWFKKPLKNT…GSAASTCILT (89 aa)).

Interacts with F-actin. Abundantly expressed in heart and skeletal muscle, and at lower levels in placenta, lung, liver and pancreas. Also expressed in HeLaS3 and MOLT-4 cell lines.

The protein resides in the cytoplasm. The protein localises to the cytoskeleton. It localises to the cell junction. Its subcellular location is the adherens junction. It is found in the myofibril. The protein resides in the sarcomere. The protein localises to the z line. Its function is as follows. Involved in regulating cell migration through association with the actin cytoskeleton. Has an essential role in the maintenance of Z line and sarcomere integrity. In Homo sapiens (Human), this protein is Nexilin.